Reading from the N-terminus, the 204-residue chain is Small ribosomal subunit protein uS7 (204 aa).

The residue at position 1 (Met1) is an N-acetylmethionine. At Thr2 the chain carries N-acetylthreonine; in 40S ribosomal protein S5, N-terminally processed. Thr14 carries the post-translational modification Phosphothreonine. At Lys47 the chain carries N6-acetyllysine; alternate. Residue Lys47 forms a Glycyl lysine isopeptide (Lys-Gly) (interchain with G-Cter in SUMO2); alternate linkage. Ser142 carries the phosphoserine modification.

The protein belongs to the universal ribosomal protein uS7 family. Component of the small ribosomal subunit. Part of the small subunit (SSU) processome, composed of more than 70 proteins and the RNA chaperone small nucleolar RNA (snoRNA) U3.

The protein localises to the cytoplasm. It is found in the nucleus. It localises to the nucleolus. In terms of biological role, component of the small ribosomal subunit. The ribosome is a large ribonucleoprotein complex responsible for the synthesis of proteins in the cell. Part of the small subunit (SSU) processome, first precursor of the small eukaryotic ribosomal subunit. During the assembly of the SSU processome in the nucleolus, many ribosome biogenesis factors, an RNA chaperone and ribosomal proteins associate with the nascent pre-rRNA and work in concert to generate RNA folding, modifications, rearrangements and cleavage as well as targeted degradation of pre-ribosomal RNA by the RNA exosome. The sequence is that of Small ribosomal subunit protein uS7 (RPS5) from Bos taurus (Bovine).